The primary structure comprises 530 residues: Bifunctional purine biosynthesis protein PurH (530 aa).

The region spanning 1-148 (MNNARPIHRA…KNHKDVAIVV (148 aa)) is the MGS-like domain.

Belongs to the PurH family.

The catalysed reaction is (6R)-10-formyltetrahydrofolate + 5-amino-1-(5-phospho-beta-D-ribosyl)imidazole-4-carboxamide = 5-formamido-1-(5-phospho-D-ribosyl)imidazole-4-carboxamide + (6S)-5,6,7,8-tetrahydrofolate. It carries out the reaction IMP + H2O = 5-formamido-1-(5-phospho-D-ribosyl)imidazole-4-carboxamide. The protein operates within purine metabolism; IMP biosynthesis via de novo pathway; 5-formamido-1-(5-phospho-D-ribosyl)imidazole-4-carboxamide from 5-amino-1-(5-phospho-D-ribosyl)imidazole-4-carboxamide (10-formyl THF route): step 1/1. It participates in purine metabolism; IMP biosynthesis via de novo pathway; IMP from 5-formamido-1-(5-phospho-D-ribosyl)imidazole-4-carboxamide: step 1/1. The chain is Bifunctional purine biosynthesis protein PurH from Vibrio cholerae serotype O1 (strain M66-2).